A 172-amino-acid polypeptide reads, in one-letter code: uncharacterized protein (172 aa).

The PfpI endopeptidase domain occupies 3–171; that stretch reads KKVAIILTNE…FNREIVNQLN (169 aa).

Belongs to the peptidase C56 family.

This is an uncharacterized protein from Staphylococcus saprophyticus subsp. saprophyticus (strain ATCC 15305 / DSM 20229 / NCIMB 8711 / NCTC 7292 / S-41).